A 515-amino-acid chain; its full sequence is Maturase K (515 aa).

This sequence belongs to the intron maturase 2 family. MatK subfamily.

The protein localises to the plastid. The protein resides in the chloroplast. In terms of biological role, usually encoded in the trnK tRNA gene intron. Probably assists in splicing its own and other chloroplast group II introns. In Pinus roxburghii (Chir pine), this protein is Maturase K.